Here is a 100-residue protein sequence, read N- to C-terminus: Urease subunit gamma (100 aa).

It belongs to the urease gamma subunit family. In terms of assembly, heterotrimer of UreA (gamma), UreB (beta) and UreC (alpha) subunits. Three heterotrimers associate to form the active enzyme.

It localises to the cytoplasm. It carries out the reaction urea + 2 H2O + H(+) = hydrogencarbonate + 2 NH4(+). It participates in nitrogen metabolism; urea degradation; CO(2) and NH(3) from urea (urease route): step 1/1. This is Urease subunit gamma from Azotobacter vinelandii (strain DJ / ATCC BAA-1303).